Reading from the N-terminus, the 101-residue chain is Small ribosomal subunit protein uS14 (101 aa).

The protein belongs to the universal ribosomal protein uS14 family. In terms of assembly, part of the 30S ribosomal subunit. Contacts proteins S3 and S10.

Binds 16S rRNA, required for the assembly of 30S particles and may also be responsible for determining the conformation of the 16S rRNA at the A site. The chain is Small ribosomal subunit protein uS14 from Acinetobacter baylyi (strain ATCC 33305 / BD413 / ADP1).